The primary structure comprises 398 residues: Phosphoglycerate kinase (398 aa).

Residues 21-23, arginine 36, 59-62, arginine 119, and arginine 157 contribute to the substrate site; these read DFN and HLGR. Residues lysine 208, glycine 296, glutamate 327, and 354-357 contribute to the ATP site; that span reads GGDS.

The protein belongs to the phosphoglycerate kinase family. Monomer.

It is found in the cytoplasm. It carries out the reaction (2R)-3-phosphoglycerate + ATP = (2R)-3-phospho-glyceroyl phosphate + ADP. Its pathway is carbohydrate degradation; glycolysis; pyruvate from D-glyceraldehyde 3-phosphate: step 2/5. This chain is Phosphoglycerate kinase, found in Streptococcus equi subsp. zooepidemicus (strain H70).